Here is a 341-residue protein sequence, read N- to C-terminus: Peptidoglycan recognition protein 3 (341 aa).

Positions 1 to 17 (MGTLPWLLAFFILGLQA) are cleaved as a signal peptide. 2 consecutive N-acetylmuramoyl-L-alanine amidase domains span residues 77 to 179 (TIGW…KVCP) and 200 to 325 (PAKY…ILSP). N-linked (GlcNAc...) asparagine glycosylation occurs at N113. Cystine bridges form between C178–C300, C194–C238, and C214–C220. Peptidoglycan-binding residues include H231, R235, and Y242. The segment at 264–269 (HTYGFN) is interaction with murein.

Belongs to the N-acetylmuramoyl-L-alanine amidase 2 family. In terms of assembly, monomer. Homodimer; disulfide-linked. Heterodimer with PGLYRP4; disulfide-linked. Post-translationally, N-glycosylated. In terms of tissue distribution, detected in skin epidermis, eccrine sweat glands and ducts, ciliary body epithelial cells of the eye, in small intestine, colon, stomach and in mature epithelial cells of the tongue (at protein level). Highly expressed in skin and esophagus, expressed also in tonsils and thymus and to a much lesser extent in the stomach, descending colon, rectum and brain.

It is found in the secreted. Functionally, pattern receptor that binds to murein peptidoglycans (PGN) of Gram-positive bacteria. Has bactericidal activity towards Gram-positive bacteria. May kill Gram-positive bacteria by interfering with peptidoglycan biosynthesis. Also binds to Gram-negative bacteria, and has bacteriostatic activity towards Gram-negative bacteria. Plays a role in innate immunity. The protein is Peptidoglycan recognition protein 3 (PGLYRP3) of Homo sapiens (Human).